We begin with the raw amino-acid sequence, 240 residues long: Uridylate kinase (240 aa).

12–15 (KLSG) provides a ligand contact to ATP. Positions 20–25 (GDKGFG) are involved in allosteric activation by GTP. Position 54 (G54) interacts with UMP. 2 residues coordinate ATP: G55 and R59. UMP is bound by residues D74 and 135-142 (TGSPYFST). ATP-binding residues include N163, Y169, and D172.

This sequence belongs to the UMP kinase family. Homohexamer.

The protein resides in the cytoplasm. It carries out the reaction UMP + ATP = UDP + ADP. It functions in the pathway pyrimidine metabolism; CTP biosynthesis via de novo pathway; UDP from UMP (UMPK route): step 1/1. Allosterically activated by GTP. Inhibited by UTP. Catalyzes the reversible phosphorylation of UMP to UDP. The chain is Uridylate kinase from Limosilactobacillus reuteri (strain DSM 20016) (Lactobacillus reuteri).